Consider the following 448-residue polypeptide: Ribosomal protein uS12 methylthiotransferase RimO (448 aa).

The region spanning Pro16–Pro126 is the MTTase N-terminal domain. Residues Cys25, Cys61, Cys90, Cys157, Cys161, and Cys164 each contribute to the [4Fe-4S] cluster site. Residues Leu143–Arg380 enclose the Radical SAM core domain. The TRAM domain maps to Arg383–Val448.

Belongs to the methylthiotransferase family. RimO subfamily. It depends on [4Fe-4S] cluster as a cofactor.

Its subcellular location is the cytoplasm. It catalyses the reaction L-aspartate(89)-[ribosomal protein uS12]-hydrogen + (sulfur carrier)-SH + AH2 + 2 S-adenosyl-L-methionine = 3-methylsulfanyl-L-aspartate(89)-[ribosomal protein uS12]-hydrogen + (sulfur carrier)-H + 5'-deoxyadenosine + L-methionine + A + S-adenosyl-L-homocysteine + 2 H(+). Its function is as follows. Catalyzes the methylthiolation of an aspartic acid residue of ribosomal protein uS12. This chain is Ribosomal protein uS12 methylthiotransferase RimO, found in Methylorubrum extorquens (strain PA1) (Methylobacterium extorquens).